A 61-amino-acid polypeptide reads, in one-letter code: Large ribosomal subunit protein uL30 (61 aa).

This sequence belongs to the universal ribosomal protein uL30 family. In terms of assembly, part of the 50S ribosomal subunit.

The protein is Large ribosomal subunit protein uL30 of Legionella pneumophila (strain Paris).